The following is a 443-amino-acid chain: tRNA modification GTPase MnmE (443 aa).

(6S)-5-formyl-5,6,7,8-tetrahydrofolate contacts are provided by Arg-23, Glu-82, and Lys-121. The TrmE-type G domain maps to Gly-215–Gln-364. Residue Asn-225 coordinates K(+). GTP is bound by residues Asn-225 to Ser-230, Thr-244 to Thr-250, and Asp-269 to Gly-272. Ser-229 contacts Mg(2+). 3 residues coordinate K(+): Thr-244, Ile-246, and Thr-249. Residue Thr-250 coordinates Mg(2+). A (6S)-5-formyl-5,6,7,8-tetrahydrofolate-binding site is contributed by Lys-443.

It belongs to the TRAFAC class TrmE-Era-EngA-EngB-Septin-like GTPase superfamily. TrmE GTPase family. In terms of assembly, homodimer. Heterotetramer of two MnmE and two MnmG subunits. The cofactor is K(+).

Its subcellular location is the cytoplasm. Exhibits a very high intrinsic GTPase hydrolysis rate. Involved in the addition of a carboxymethylaminomethyl (cmnm) group at the wobble position (U34) of certain tRNAs, forming tRNA-cmnm(5)s(2)U34. In Chlamydia felis (strain Fe/C-56) (Chlamydophila felis), this protein is tRNA modification GTPase MnmE.